We begin with the raw amino-acid sequence, 337 residues long: D-alanine--D-alanine ligase (337 aa).

The region spanning 124-330 (KMWFSALGIP…FTEYLSLVIN (207 aa)) is the ATP-grasp domain. Position 154–209 (154–209 (ALANWGSIFIKAASQGSSVGCYKVDDSSKVAQVLKDAFGYAPYVVVEKTIKARELE)) interacts with ATP. D284, E297, and N299 together coordinate Mg(2+).

The protein belongs to the D-alanine--D-alanine ligase family. Mg(2+) is required as a cofactor. It depends on Mn(2+) as a cofactor.

The protein resides in the cytoplasm. It catalyses the reaction 2 D-alanine + ATP = D-alanyl-D-alanine + ADP + phosphate + H(+). Its pathway is cell wall biogenesis; peptidoglycan biosynthesis. Functionally, cell wall formation. This Shewanella putrefaciens (strain CN-32 / ATCC BAA-453) protein is D-alanine--D-alanine ligase.